Here is a 456-residue protein sequence, read N- to C-terminus: G-protein coupled receptor 39 (456 aa).

At Met-1–Ile-34 the chain is on the extracellular side. Intrachain disulfides connect Cys-11/Cys-191 and Cys-108/Cys-210. Positions 17 and 19 each coordinate Zn(2+). Residues Leu-35 to Thr-55 traverse the membrane as a helical segment. The Cytoplasmic segment spans residues Gln-56 to Thr-69. A helical transmembrane segment spans residues Asp-70–Met-89. Residues Glu-90 to Lys-109 are Extracellular-facing. A helical transmembrane segment spans residues Leu-110–Phe-131. At Glu-132 to Gln-151 the chain is on the cytoplasmic side. Residues Val-152 to Phe-172 traverse the membrane as a helical segment. The Extracellular segment spans residues Ala-173–Trp-217. N-linked (GlcNAc...) asparagine glycans are attached at residues Asn-192 and Asn-206. Residues Glu-218 to Cys-242 form a helical membrane-spanning segment. Topologically, residues Trp-243–Ile-283 are cytoplasmic. The helical transmembrane segment at Phe-284–Met-305 threads the bilayer. Over Ala-306–Met-323 the chain is Extracellular. A helical transmembrane segment spans residues Ile-324–Tyr-344. Topologically, residues Asn-345 to Val-456 are cytoplasmic. Ser-397 carries the phosphoserine modification. The interval Phe-415–Val-456 is disordered. The segment covering Ser-430–Val-456 has biased composition (polar residues).

Belongs to the G-protein coupled receptor 1 family. In terms of assembly, interacts with HTR1A. Interacts with GALR1. In terms of tissue distribution, expression is detected in septumamygdala, parietal cells, enterocytes, neurons and pancreas, in peripheral organs such as the duodenum and kidney but not in the pituitary and hypothalamus.

It is found in the cell membrane. Its function is as follows. Zinc-sensing receptor that can sense changes in extracellular Zn(2+), mediate Zn(2+) signal transmission, and participates in the regulation of numerous physiological processes including glucose homeostasis regulation, gastrointestinal mobility, hormone secretion and cell death. Activation by Zn(2+) in keratinocytes increases the intracellular concentration of Ca(2+) and activates the ERK/MAPK and PI3K/AKT signaling pathways leading to epithelial repair. Plays an essential role in normal wound healing by inducing the production of cytokines including the major inflammatory cytokine IL6 via the PKC/MAPK/CEBPB pathway. Regulates adipose tissue metabolism, especially lipolysis, and regulates the function of lipases, such as hormone-sensitive lipase and adipose triglyceride lipase. Plays a role in the inhibition of cell death and protects against oxidative, endoplasmic reticulum and mitochondrial stress by inducing secretion of the cytoprotective pigment epithelium-derived growth factor (PEDF) and probably other protective transcripts in a GNA13/RHOA/SRE-dependent manner. Forms dynamic heteroreceptor complexes with HTR1A and GALR1 depending on cell type or specific physiological states, resulting in signaling diversity: HTR1A-GPR39 shows additive increase in signaling along the serum response element (SRE) and NF-kappa-B pathways while GALR1 acts as an antagonist blocking SRE. This Mus musculus (Mouse) protein is G-protein coupled receptor 39 (Gpr39).